The chain runs to 218 residues: MEIGISIEAENKVGVLHKLTGILSELGGNITYTQQFIKDDGKIGFIYMEVEGIKDIEELKRRMESCECVKSFEIHSSLKKIYGKRVIIIGGGAQVAEVARGAISEADRHNIRGERISVDTLPIVGEENLYEAVKAVATLPRVGILVLAGSLMGGKITEAVKELKEKTGIPVISLKMFGSVPKVADLVVGDPLQAGVLAVMAIAETAKFDINKVKGRVL.

The 80-residue stretch at 4-83 (GISIEAENKV…IHSSLKKIYG (80 aa)) folds into the ACT domain.

This is an uncharacterized protein from Methanocaldococcus jannaschii (strain ATCC 43067 / DSM 2661 / JAL-1 / JCM 10045 / NBRC 100440) (Methanococcus jannaschii).